We begin with the raw amino-acid sequence, 1161 residues long: DNA-directed RNA polymerase 132 kDa polypeptide (1161 aa).

This sequence belongs to the RNA polymerase beta chain family. In terms of assembly, the DNA-dependent RNA polymerase used for intermediate and late genes expression consists of eight subunits (147) kDa, (133) kDa, (35) kDa, (30) kDa, (22) kDa, (19) kDa, (18) kDa and (7) kDa totalling more than 500 kDa in mass. The same holoenzyme, with the addition of the transcription-specificity factor RAP94, is used for early gene expression.

It is found in the virion. It carries out the reaction RNA(n) + a ribonucleoside 5'-triphosphate = RNA(n+1) + diphosphate. Functionally, part of the DNA-dependent RNA polymerase which catalyzes the transcription of viral DNA into RNA using the four ribonucleoside triphosphates as substrates. Responsible for the transcription of early, intermediate and late genes. DNA-dependent RNA polymerase associates with the early transcription factor (ETF), itself composed of D6 and A7, thereby allowing the early genes transcription. Late transcription, and probably also intermediate transcription, require newly synthesized RNA polymerase. The protein is DNA-directed RNA polymerase 132 kDa polypeptide (RPO132) of Fowlpox virus (strain NVSL) (FPV).